We begin with the raw amino-acid sequence, 121 residues long: Small ribosomal subunit protein uS13 (121 aa).

The tract at residues 93-121 (RGLPVRGQNSKNNARTRKGPRRTVANKKK) is disordered. Residues 106-121 (ARTRKGPRRTVANKKK) are compositionally biased toward basic residues.

The protein belongs to the universal ribosomal protein uS13 family. In terms of assembly, part of the 30S ribosomal subunit. Forms a loose heterodimer with protein S19. Forms two bridges to the 50S subunit in the 70S ribosome.

Located at the top of the head of the 30S subunit, it contacts several helices of the 16S rRNA. In the 70S ribosome it contacts the 23S rRNA (bridge B1a) and protein L5 of the 50S subunit (bridge B1b), connecting the 2 subunits; these bridges are implicated in subunit movement. Contacts the tRNAs in the A and P-sites. This Bacillus subtilis (strain 168) protein is Small ribosomal subunit protein uS13.